The sequence spans 194 residues: Early growth response protein 1 (194 aa).

3 consecutive C2H2-type zinc fingers follow at residues 1–18 (CDRRFSRSDELTRHIRIH), 24–46 (FQCRICMRNFSRSDHLTTHIRTH), and 52–74 (FACDICGRKFARSDERKRHTKIH).

The protein belongs to the EGR C2H2-type zinc-finger protein family.

It localises to the nucleus. Its subcellular location is the cytoplasm. Its function is as follows. Transcriptional regulator. Recognizes and binds to the DNA sequence 5'-GCG(T/G)GGGCG-3'(EGR-site) in the promoter region of target genes. Binds double-stranded target DNA, irrespective of the cytosine methylation status. Regulates the transcription of numerous target genes, and thereby plays an important role in regulating the response to growth factors, DNA damage, and ischemia. Plays a role in the regulation of cell survival, proliferation and cell death. Mediates responses to ischemia and hypoxia; regulates the expression of proteins that are involved in inflammatory processes. Plays a role in regulating the expression of circadian clock genes. The polypeptide is Early growth response protein 1 (EGR1) (Gallus gallus (Chicken)).